A 236-amino-acid polypeptide reads, in one-letter code: Small ribosomal subunit protein uS2c (236 aa).

Belongs to the universal ribosomal protein uS2 family.

Its subcellular location is the plastid. The protein localises to the chloroplast. In Crucihimalaya wallichii (Rock-cress), this protein is Small ribosomal subunit protein uS2c (rps2).